A 506-amino-acid chain; its full sequence is Histone deacetylase complex subunit CTI6 (506 aa).

The tract at residues 49–71 is disordered; it reads EESVKQEDVPMEGGEGEVEEEEG. The span at 62-71 shows a compositional bias: acidic residues; sequence GEGEVEEEEG. The PHD-type zinc-finger motif lies at 72–123; it reads ETRCICGELDTPDDSGFFIQCEQCSSWQHGYCVSITQDNAPDKYWCEQCRPE. A disordered region spans residues 138–425; that stretch reads IYKPVQEKRR…KPRLPPQRTS (288 aa). A Phosphothreonine modification is found at Thr174. Ser175 bears the Phosphoserine mark. Thr177 bears the Phosphothreonine mark. The segment covering 179–195 has biased composition (acidic residues); it reads DNVDDIGDEEDEVEDEA. A phosphoserine mark is found at Ser216 and Ser267. Basic and acidic residues-rich tracts occupy residues 231–271 and 312–342; these read DSDK…HQED and DDMK…EKES. A compositionally biased stretch (basic residues) spans 373-393; that stretch reads ASSRGSKRVSKPARKGNRTRR. Positions 394 to 404 are enriched in polar residues; that stretch reads SNTSSDTNQNR. Positions 405-415 are enriched in basic and acidic residues; it reads RSADIGTDKPV.

Component of the RPD3C(L) complex composed of at least ASH1, CTI6, DEP1, PHO23, RPD3, RXT2, RXT3, SAP30, SDS3, SIN3, UME1 and UME6. Interacts with CYC8.

The protein resides in the nucleus. Component of the RPD3C(L) histone deacetylase complex (HDAC). Responsible for the deacetylation of lysine residues on the N-terminal part of the core histones (H2A, H2B, H3 and H4). Histone deacetylation gives a tag for epigenetic repression and plays an important role in transcriptional regulation, cell cycle progression and developmental events. CTI6 links the SAGA coactivator to the CYC8-TUP1 corepressor. Involved in transcription regulation of heme-regulated genes and required for GCN5 recruitment, histone H3 acetylation and SPT15/TBP binding to promoters. The chain is Histone deacetylase complex subunit CTI6 (CTI6) from Saccharomyces cerevisiae (strain ATCC 204508 / S288c) (Baker's yeast).